Reading from the N-terminus, the 324-residue chain is NADH-ubiquinone oxidoreductase chain 1 (324 aa).

Transmembrane regions (helical) follow at residues 9–29 (LINPLAYIVPVLLAVAFLTLI), 75–95 (FLFLAAPVLALTLAMTLWAPM), 106–126 (LGILFILALSSLAVYSILGSG), 146–166 (ISYEVSLGLILLSVIIFSGGY), 177–197 (SIWLLIPAWPLAAMWYISTLA), 228–248 (LFFLAEYANILLMNTLSAVLF), 259–279 (ELTTINLMTKAALLSIMFLWV), and 299–319 (FLPLTLAFVLWHTALPIALAG).

It belongs to the complex I subunit 1 family.

The protein localises to the mitochondrion inner membrane. It carries out the reaction a ubiquinone + NADH + 5 H(+)(in) = a ubiquinol + NAD(+) + 4 H(+)(out). Core subunit of the mitochondrial membrane respiratory chain NADH dehydrogenase (Complex I) that is believed to belong to the minimal assembly required for catalysis. Complex I functions in the transfer of electrons from NADH to the respiratory chain. The immediate electron acceptor for the enzyme is believed to be ubiquinone. This is NADH-ubiquinone oxidoreductase chain 1 (MT-ND1) from Cyprinus carpio (Common carp).